The chain runs to 268 residues: D-alanyl-D-alanine carboxypeptidase (268 aa).

Residues 25–47 (AFLWAFIISFTVCTLFLGWRLVS) traverse the membrane as a helical segment. Substrate is bound by residues Q151, 179–181 (WVA), and S186. Residues H188 and D195 each contribute to the Zn(2+) site. E238 functions as the Proton donor/acceptor in the catalytic mechanism. Residue H241 coordinates Zn(2+).

Belongs to the peptidase M15B family. Monomer. Zn(2+) serves as cofactor.

The protein resides in the cell membrane. Its activity is regulated as follows. Carboxypeptidase activity is insensitive to beta-lactams since it is not affected by penicillin G or ampicillin and is inhibited only by very high concentrations of cefalotin and cefoxitin. Carboxypeptidase that cleaves the C-terminal D-alanine residue from the peptidoglycan-derived pentapeptide L-Ala-gamma-D-Glu-L-Lys-D-Ala-D-Ala in vitro. Therefore, should contribute in vivo to the hydrolysis of the D-alanyl-D-alanine-containing peptidoglycan precursors. May increase the level of glycopeptide antibiotics resistance by decreasing the availability of D-Ala-D-Ala termini from the cell surface, which constitute the antibiotic target residues. The chain is D-alanyl-D-alanine carboxypeptidase from Enterococcus faecalis (strain ATCC 700802 / V583).